Reading from the N-terminus, the 335-residue chain is 2-acylglycerol O-acyltransferase 1 (335 aa).

The next 2 membrane-spanning stretches (helical) occupy residues 18-38 (TVAV…SIGI) and 40-60 (VMLI…WLYF). N121 and N125 each carry an N-linked (GlcNAc...) asparagine glycan. Residues 132 to 152 (LFPGFTSYLHVLPLWFWCPVF) form a helical membrane-spanning segment. N180 carries an N-linked (GlcNAc...) asparagine glycan.

Belongs to the diacylglycerol acyltransferase family. As to expression, expressed in stomach and liver.

It is found in the endoplasmic reticulum membrane. The enzyme catalyses a 2-acylglycerol + an acyl-CoA = a 1,2-diacylglycerol + CoA. The catalysed reaction is 2-(9Z-octadecenoyl)-glycerol + butanoyl-CoA = 1-butanoyl-2-(9Z-octadecenoyl)-glycerol + CoA. It catalyses the reaction 2-(9Z-octadecenoyl)-glycerol + octanoyl-CoA = 1-octanoyl-2-(9Z-octadecenoyl)-glycerol + CoA. It carries out the reaction 2-(9Z-octadecenoyl)-glycerol + dodecanoyl-CoA = 1-dodecanoyl-2-(9Z-octadecenoyl)-glycerol + CoA. The enzyme catalyses 2-(9Z-octadecenoyl)-glycerol + tetradecanoyl-CoA = 1-tetradecanoyl-2-(9Z-octadecenoyl)-glycerol + CoA. The catalysed reaction is 2-(9Z-octadecenoyl)-glycerol + hexadecanoyl-CoA = 1-hexadecanoyl-2-(9Z-octadecenoyl)-glycerol + CoA. It catalyses the reaction 2-(9Z-octadecenoyl)-glycerol + octadecanoyl-CoA = 1-octadecanoyl-2-(9Z-octadecenoyl)-glycerol + CoA. It carries out the reaction eicosanoyl-CoA + 2-(9Z-octadecenoyl)-glycerol = 1-eicosanoyl-2-(9Z-octadecenoyl)-glycerol + CoA. The enzyme catalyses 2-(9Z-octadecenoyl)-glycerol + (9Z)-octadecenoyl-CoA = 1,2-di-(9Z-octadecenoyl)-glycerol + CoA. The catalysed reaction is 2-(9Z-octadecenoyl)-glycerol + (9Z,12Z)-octadecadienoyl-CoA = 1-(9Z,12Z-octadecadienoyl)-2-(9Z-octadecenoyl)-glycerol + CoA. It catalyses the reaction 2-(9Z-octadecenoyl)-glycerol + (5Z,8Z,11Z,14Z)-eicosatetraenoyl-CoA = 1-(5Z,8Z,11Z,14Z-eicosatetraenoyl)-2-(9Z-octadecenoyl)-glycerol + CoA. It carries out the reaction a 2-acylglycerol + an acyl-CoA = a 1,2-diacyl-sn-glycerol + CoA. The enzyme catalyses a 2-acylglycerol + an acyl-CoA = a 2,3-diacyl-sn-glycerol + CoA. The catalysed reaction is a 1-acylglycerol + an acyl-CoA = a 1,2-diacylglycerol + CoA. It catalyses the reaction 1-dodecanoylglycerol + (9Z)-octadecenoyl-CoA = 1-dodecanoyl-2-(9Z-octadecenoyl)-glycerol + CoA. It carries out the reaction 1-tetradecanoylglycerol + (9Z)-octadecenoyl-CoA = 1-tetradecanoyl-2-(9Z-octadecenoyl)-glycerol + CoA. The enzyme catalyses 1-hexadecanoylglycerol + (9Z)-octadecenoyl-CoA = 1-hexadecanoyl-2-(9Z-octadecenoyl)-glycerol + CoA. The catalysed reaction is 1-(9Z-octadecenoyl)-glycerol + (9Z)-octadecenoyl-CoA = 1,2-di-(9Z-octadecenoyl)-glycerol + CoA. It catalyses the reaction 1-(9Z,12Z-octadecadienoyl)-glycerol + (9Z)-octadecenoyl-CoA = 1-(9Z,12Z-octadecadienoyl)-2-(9Z-octadecenoyl)-glycerol + CoA. It carries out the reaction 1-(9Z,12Z,15Z-octadecatrienoyl)-glycerol + (9Z)-octadecenoyl-CoA = 1-(9Z,12Z,15Z-octadecatrienoyl)-2-(9Z-octadecenoyl)-glycerol + CoA. The enzyme catalyses 1-(5Z,8Z,11Z,14Z-eicosatetraenoyl)-glycerol + (9Z)-octadecenoyl-CoA = 1-(5Z,8Z,11Z,14Z-eicosatetraenoyl)-2-(9Z-octadecenoyl)-glycerol + CoA. The catalysed reaction is a 1-acylglycerol + an acyl-CoA = a 1,3-diacylglycerol + CoA. It catalyses the reaction 1-dodecanoylglycerol + (9Z)-octadecenoyl-CoA = 1-dodecanoyl-3-(9Z-octadecenoyl)-glycerol + CoA. It carries out the reaction 1-hexadecanoylglycerol + (9Z)-octadecenoyl-CoA = 1-(9Z-octadecenoyl)-3-hexadecanoylglycerol + CoA. The enzyme catalyses 1-octadecanoylglycerol + (9Z)-octadecenoyl-CoA = 1-octadecanoyl-3-(9Z-octadecenoyl)-glycerol + CoA. The catalysed reaction is 1-(9Z-octadecenoyl)-sn-glycerol + (9Z)-octadecenoyl-CoA = 1,3-di-(9Z-octadecenoyl)-glycerol + CoA. It catalyses the reaction 1-(9Z,12Z-octadecadienoyl)-glycerol + (9Z)-octadecenoyl-CoA = 1-(9Z-octadecenoyl)-3-(9Z,12Z-octadecadienoyl)-glycerol + CoA. It carries out the reaction 1-(9Z,12Z,15Z-octadecatrienoyl)-glycerol + (9Z)-octadecenoyl-CoA = 1-(9Z,12Z,15Z-octadecatrienoyl)-3-(9Z-octadecenoyl)-glycerol + CoA. The enzyme catalyses a 1-acyl-sn-glycerol + an acyl-CoA = a 1,3-diacyl-sn-glycerol + CoA. The catalysed reaction is a 3-acyl-sn-glycerol + an acyl-CoA = a 1,3-diacyl-sn-glycerol + CoA. It catalyses the reaction 3-octadecanoyl-sn-glycerol + (9Z)-octadecenoyl-CoA = 1-(9Z-octadecenoyl)-3-octadecanoyl-sn-glycerol + CoA. It functions in the pathway glycerolipid metabolism; triacylglycerol biosynthesis. In terms of biological role, involved in glycerolipid synthesis and lipid metabolism. Catalyzes the formation of diacylglycerol, the precursor of triacylglycerol, by transferring the acyl chain of a fatty acyl-CoA to a monoacylglycerol, mainly at the sn-1 or sn-3 positions. It uses both sn-2-monoacylglycerol (2-acylglycerol) and sn-1-monoacylglycerol (1-acyl-sn-glycerol) equally well as substrates, and uses sn-3-monoacylglycerol (3-acyl-sn-glycerol) with lower efficiency. Probably not involved in absorption of dietary fat in the small intestine. This is 2-acylglycerol O-acyltransferase 1 from Homo sapiens (Human).